We begin with the raw amino-acid sequence, 328 residues long: Malate dehydrogenase (328 aa).

NAD(+) is bound at residue 16–22 (GAAGQIS). Substrate contacts are provided by Arg-97 and Arg-103. NAD(+)-binding positions include Asn-110, Gln-117, and 134–136 (VGN). Residues Asn-136 and Arg-167 each coordinate substrate. Residue His-192 is the Proton acceptor of the active site.

It belongs to the LDH/MDH superfamily. MDH type 2 family. In terms of assembly, homotetramer.

It carries out the reaction (S)-malate + NAD(+) = oxaloacetate + NADH + H(+). Its activity is regulated as follows. Citrate activates the enzyme in the oxidation of malate to oxaloacetate and inhibits it in the reverse reaction. Its function is as follows. Catalyzes the reversible oxidation of malate to oxaloacetate. Exhibits higher catalytic efficiency for oxaloacetate reduction than for malate oxidation in vitro. Almost equally active both for NADH and NADPH on the bases of the kcat values at pH 6.5, but catalytic efficiency for oxaloacetate reduction is 50-fold higher with NADH. This chain is Malate dehydrogenase, found in Corynebacterium glutamicum (strain ATCC 13032 / DSM 20300 / JCM 1318 / BCRC 11384 / CCUG 27702 / LMG 3730 / NBRC 12168 / NCIMB 10025 / NRRL B-2784 / 534).